Consider the following 342-residue polypeptide: tRNA N6-adenosine threonylcarbamoyltransferase (342 aa).

Fe cation-binding residues include His-114 and His-118. Substrate-binding positions include 136–140, Asp-169, Gly-182, Asp-186, and Asn-275; that span reads LVSGG. Position 301 (Asp-301) interacts with Fe cation.

This sequence belongs to the KAE1 / TsaD family. It depends on Fe(2+) as a cofactor.

It is found in the cytoplasm. The enzyme catalyses L-threonylcarbamoyladenylate + adenosine(37) in tRNA = N(6)-L-threonylcarbamoyladenosine(37) in tRNA + AMP + H(+). Required for the formation of a threonylcarbamoyl group on adenosine at position 37 (t(6)A37) in tRNAs that read codons beginning with adenine. Is involved in the transfer of the threonylcarbamoyl moiety of threonylcarbamoyl-AMP (TC-AMP) to the N6 group of A37, together with TsaE and TsaB. TsaD likely plays a direct catalytic role in this reaction. The sequence is that of tRNA N6-adenosine threonylcarbamoyltransferase from Streptococcus pyogenes serotype M3 (strain ATCC BAA-595 / MGAS315).